The following is a 209-amino-acid chain: tRNA (guanine-N(7)-)-methyltransferase (209 aa).

Asp35, Glu60, Asn87, and Asp113 together coordinate S-adenosyl-L-methionine. Asp113 is an active-site residue. The substrate site is built by Lys117 and Asp149.

This sequence belongs to the class I-like SAM-binding methyltransferase superfamily. TrmB family.

The enzyme catalyses guanosine(46) in tRNA + S-adenosyl-L-methionine = N(7)-methylguanosine(46) in tRNA + S-adenosyl-L-homocysteine. The protein operates within tRNA modification; N(7)-methylguanine-tRNA biosynthesis. Catalyzes the formation of N(7)-methylguanine at position 46 (m7G46) in tRNA. This chain is tRNA (guanine-N(7)-)-methyltransferase, found in Prochlorococcus marinus (strain MIT 9215).